Consider the following 155-residue polypeptide: Protein-export protein SecB (155 aa).

It belongs to the SecB family. Homotetramer, a dimer of dimers. One homotetramer interacts with 1 SecA dimer.

The protein localises to the cytoplasm. Its function is as follows. One of the proteins required for the normal export of preproteins out of the cell cytoplasm. It is a molecular chaperone that binds to a subset of precursor proteins, maintaining them in a translocation-competent state. It also specifically binds to its receptor SecA. This is Protein-export protein SecB from Albidiferax ferrireducens (strain ATCC BAA-621 / DSM 15236 / T118) (Rhodoferax ferrireducens).